A 59-amino-acid polypeptide reads, in one-letter code: Ferredoxin-2 (59 aa).

2 4Fe-4S ferredoxin-type domains span residues 3–32 (YSVI…LQNG) and 33–59 (KAVP…AIVE). The [4Fe-4S] cluster site is built by C12, C15, C18, C22, C42, C45, C48, and C52.

Homodimer. Requires [4Fe-4S] cluster as cofactor.

The protein resides in the periplasm. Its function is as follows. Ferredoxins are iron-sulfur proteins that transfer electrons in a wide variety of metabolic reactions. This Desulfomicrobium norvegicum (strain DSM 1741 / NCIMB 8310) (Desulfovibrio baculatus (strain Norway 4)) protein is Ferredoxin-2.